The sequence spans 555 residues: Formate--tetrahydrofolate ligase (555 aa).

64–71 (TKAGIGKT) contacts ATP.

This sequence belongs to the formate--tetrahydrofolate ligase family.

The catalysed reaction is (6S)-5,6,7,8-tetrahydrofolate + formate + ATP = (6R)-10-formyltetrahydrofolate + ADP + phosphate. Its pathway is one-carbon metabolism; tetrahydrofolate interconversion. The protein is Formate--tetrahydrofolate ligase of Bacteroides thetaiotaomicron (strain ATCC 29148 / DSM 2079 / JCM 5827 / CCUG 10774 / NCTC 10582 / VPI-5482 / E50).